The chain runs to 373 residues: Protein SENSITIVE TO PROTON RHIZOTOXICITY 2 (373 aa).

2 C2H2-type zinc fingers span residues 217–239 and 327–362; these read HYCQ…MRAH and KHCG…VPAH.

Expressed at low levels in roots (e.g. root tips and lateral roots), leaves (e.g. at the edge of mature leaves, possibly in hydathodes, and in vascular bundles), flowers (e.g. floral filaments), stems, siliques and cotyledons.

The protein localises to the nucleus. In terms of biological role, probable transcription factor. Together with STOP1, plays a critical role in tolerance to major stress factors in acid soils such as proton H(+) and aluminum ion Al(3+). Required for the expression of genes in response to acidic stress (e.g. ALMT1 and MATE), and Al-activated citrate exudation. In Arabidopsis thaliana (Mouse-ear cress), this protein is Protein SENSITIVE TO PROTON RHIZOTOXICITY 2.